A 339-amino-acid polypeptide reads, in one-letter code: uncharacterized protein (339 aa).

A compositionally biased stretch (polar residues) spans 1 to 12; the sequence is MDIDLNNQTDNN. A disordered region spans residues 1–30; sequence MDIDLNNQTDNNELIVEDTENPKNPNSTNI.

This is an uncharacterized protein from Acanthamoeba polyphaga (Amoeba).